A 475-amino-acid polypeptide reads, in one-letter code: UDP-N-acetylmuramate--L-alanine ligase (475 aa).

An ATP-binding site is contributed by 114–120; the sequence is GTHGKTT.

The protein belongs to the MurCDEF family.

It localises to the cytoplasm. The enzyme catalyses UDP-N-acetyl-alpha-D-muramate + L-alanine + ATP = UDP-N-acetyl-alpha-D-muramoyl-L-alanine + ADP + phosphate + H(+). It functions in the pathway cell wall biogenesis; peptidoglycan biosynthesis. Its function is as follows. Cell wall formation. This chain is UDP-N-acetylmuramate--L-alanine ligase, found in Bartonella quintana (strain Toulouse) (Rochalimaea quintana).